The chain runs to 2776 residues: Microtubule-associated protein 1A (2776 aa).

Residues S114, S117, S118, S121, and S155 each carry the phosphoserine modification. Y177 carries the post-translational modification Phosphotyrosine. Positions 310 to 331 (PSKIKHRADSKESLKAAPKTAM) are disordered. Phosphoserine occurs at positions 319 and 322. Repeat unit 1 spans residues 336–338 (KRE). The interval 336-541 (KREEVLEEGA…TQDFEELKRE (206 aa)) is 11 X 3 AA approximate repeats of K-K-[DE]. Residues 345–390 (AKEARSELAKELAKSEKKAKEPSEKPPEKPSKPERVRTESSEALKA) show a composition bias toward basic and acidic residues. 8 disordered regions span residues 345–678 (AKEA…KAES), 738–809 (TIPG…TELT), 846–1076 (EDQS…AGGQ), 1094–1210 (ETGE…ESLG), 1223–1651 (EKGP…SPEQ), 1685–1729 (DGQG…FKDF), 1744–1848 (LAES…APFS), and 1866–2648 (AELE…NGLK). S384 bears the Phosphoserine mark. Residues 391–406 (EKRKLIKDKVGKKHLK) are compositionally biased toward basic residues. Basic and acidic residues-rich tracts occupy residues 407–464 (EKIS…KPDL) and 484–500 (LKVD…ELSS). A run of 9 repeats spans residues 415–417 (KRD), 420–422 (KKE), 424–426 (KKE), 427–429 (RKE), 431–433 (KKE), 436–438 (RKE), 440–442 (KKD), 444–446 (KKD), and 449–451 (RKD). T504 is subject to Phosphothreonine. A phosphoserine mark is found at S526 and S527. Basic and acidic residues predominate over residues 536-556 (EELKREERGLLAEPRDTELGE). Repeat unit 11 spans residues 539 to 541 (KRE). Residues 567-579 (GRPSTAIQVTQPP) show a composition bias toward polar residues. Residues 587–631 (QVEREKEVVPDFPEDKGSKNRAPDSGAEVEREKETWEERKPREAE) are compositionally biased toward basic and acidic residues. Phosphoserine occurs at positions 604 and 611. A Phosphothreonine modification is found at T633. Residues 640–667 (AREESEPEVKEDVIEKAELEEMEEVHPS) show a composition bias toward basic and acidic residues. Phosphoserine occurs at positions 644, 667, 678, and 786. Composition is skewed to polar residues over residues 785 to 800 (ASQS…SSKT), 846 to 859 (EDQS…PQTE), and 870 to 882 (TVTS…TEAT). S873, S876, S877, and S890 each carry phosphoserine. T893 carries the phosphothreonine modification. S895, S899, and S908 each carry phosphoserine. A compositionally biased stretch (polar residues) spans 944-954 (VTTSEKLSSQY). 7 positions are modified to phosphoserine: S981, S991, S999, S1008, S1014, S1023, and S1062. Residue T1068 is modified to Phosphothreonine. Residues 1096–1105 (GEAGAASGAG) show a composition bias toward low complexity. Basic and acidic residues predominate over residues 1112–1124 (RTQEPAEPQKDEL). Residues S1131, S1133, S1147, S1159, S1177, S1187, S1190, S1196, S1205, and S1208 each carry the phosphoserine modification. A compositionally biased stretch (polar residues) spans 1179 to 1189 (EDTQSLSFSEE). Residues 1197–1210 (LDISSKQLSPESLG) are compositionally biased toward polar residues. A compositionally biased stretch (basic and acidic residues) spans 1223 to 1234 (EKGPLVKAEDNS). Residues S1251, S1289, S1310, S1313, and S1316 each carry the phosphoserine modification. The segment covering 1302–1317 (TSDSSLTKSPESLSSP) has biased composition (low complexity). Basic and acidic residues-rich tracts occupy residues 1332–1350 (GSED…RKSE), 1370–1384 (SVMH…EENK), 1391–1435 (KTSE…KALE), 1449–1488 (PRAR…RAPE), 1499–1541 (RAPE…DQDN), and 1549–1599 (GTLK…EKTR). Phosphoserine is present on residues S1516, S1580, and S1606. The span at 1609-1625 (EEGKAREQEEKYWKEQD) shows a compositional bias: basic and acidic residues. Residues S1634 and S1648 each carry the phosphoserine modification. Residues 1709-1718 (QEITPLQHTP) show a composition bias toward polar residues. S1720, S1747, S1762, S1768, and S1772 each carry phosphoserine. At T1777 the chain carries Phosphothreonine. S1783 and S1789 each carry phosphoserine. A compositionally biased stretch (polar residues) spans 1794 to 1808 (TKSTPPTRNEPTTPS). Positions 1823 to 1844 (LPPAPLSPAPAPPTPAPDPHAP) are enriched in pro residues. Over residues 1878-1890 (KDYRKAEGEREGE) the composition is skewed to basic and acidic residues. The residue at position 1902 (S1902) is a Phosphoserine. 2 stretches are compositionally biased toward basic and acidic residues: residues 1907–1935 (EVTE…DERS) and 1972–1988 (STKE…EKEL). The residue at position 1928 (T1928) is a Phosphothreonine. Polar residues predominate over residues 1990–2006 (SAVSPPNLHSDTPTFSY). S1993 carries the phosphoserine modification. Residues 2013-2039 (TIPPRQEPEPGPNVEPSFTPPAVPPRA) show a composition bias toward pro residues. The residue at position 2031 (T2031) is a Phosphothreonine. Residues 2042 to 2058 (SLSQDPSPPLNGSTTSC) are compositionally biased toward polar residues. 2 positions are modified to phosphoserine: S2048 and S2082. The span at 2060 to 2096 (PDRRTPSPKEAGRSHWDDGTNDSDLEKGAREQPEKET) shows a compositional bias: basic and acidic residues. Over residues 2149-2158 (PAPPQLPSPA) the composition is skewed to pro residues. Phosphoserine occurs at positions 2209, 2226, 2230, 2233, and 2234. The span at 2231–2242 (EGSSSEATTPVI) shows a compositional bias: polar residues. Positions 2279-2292 (PLSPAPLASRDLAP) are enriched in low complexity. Residues 2355 to 2367 (AEKEEAEALHAWE) show a composition bias toward basic and acidic residues. S2425 carries the phosphoserine modification. A compositionally biased stretch (low complexity) spans 2478–2490 (SASDSGSSQSDSD). Pro residues predominate over residues 2535-2551 (DPPPAPLPDPRPPPPRP). Positions 2566 to 2576 (GRVERLREKVQ) are enriched in basic and acidic residues. A phosphoserine mark is found at S2623 and S2637.

It belongs to the MAP1 family. In terms of assembly, 3 different light chains, LC1 (a cleavage product of MAP1B), LC2 (a cleavage product of MAP1A) and LC3 (produced by one of the MAP1LC3 genes), can associate with the MAP1A or MAP1B heavy chains. Interacts with guanylate kinase-like domain of DLG1, DLG2 and DLG4. Binds to CSNK1D. Interacts with TIAM2. As to quaternary structure, interacts with ELAVL4. In terms of processing, phosphorylated by CSNK1D. LC2 is generated from MAP1A by proteolytic processing. It is free to associate with both MAP1A and MAP1B. Both isoforms highly expressed in brain, and to a lesser extent in embryo. Isoform 1 is also expressed at a low level in other tissues including heart and muscle.

The protein localises to the cytoplasm. It is found in the cytoskeleton. In terms of biological role, structural protein involved in the filamentous cross-bridging between microtubules and other skeletal elements. The chain is Microtubule-associated protein 1A (Map1a) from Mus musculus (Mouse).